A 453-amino-acid polypeptide reads, in one-letter code: Chromosomal replication initiator protein DnaA (453 aa).

Residues M1 to L75 form a domain I, interacts with DnaA modulators region. The segment at L75 to T114 is domain II. Basic and acidic residues predominate over residues K87–S103. Residues K87–H112 are disordered. The segment at W115–S331 is domain III, AAA+ region. Positions 159, 161, 162, and 163 each coordinate ATP. The domain IV, binds dsDNA stretch occupies residues S332 to D453.

This sequence belongs to the DnaA family. In terms of assembly, oligomerizes as a right-handed, spiral filament on DNA at oriC.

Its subcellular location is the cytoplasm. In terms of biological role, plays an essential role in the initiation and regulation of chromosomal replication. ATP-DnaA binds to the origin of replication (oriC) to initiate formation of the DNA replication initiation complex once per cell cycle. Binds the DnaA box (a 9 base pair repeat at the origin) and separates the double-stranded (ds)DNA. Forms a right-handed helical filament on oriC DNA; dsDNA binds to the exterior of the filament while single-stranded (ss)DNA is stabiized in the filament's interior. The ATP-DnaA-oriC complex binds and stabilizes one strand of the AT-rich DNA unwinding element (DUE), permitting loading of DNA polymerase. After initiation quickly degrades to an ADP-DnaA complex that is not apt for DNA replication. Binds acidic phospholipids. The protein is Chromosomal replication initiator protein DnaA of Natranaerobius thermophilus (strain ATCC BAA-1301 / DSM 18059 / JW/NM-WN-LF).